The primary structure comprises 328 residues: WUSCHEL-related homeobox 6 (328 aa).

The span at 1–11 (MEGSSNSPDRQ) shows a compositional bias: polar residues. A disordered region spans residues 1–45 (MEGSSNSPDRQSSGGSPPEERGGGGSGGGGGRSAAGEPVRSRWTP). A compositionally biased stretch (gly residues) spans 23-33 (GGGSGGGGGRS). A DNA-binding region (homeobox; WUS-type) is located at residues 38 to 102 (PVRSRWTPKP…NRRSRSRRRQ (65 aa)).

The protein belongs to the WUS homeobox family.

It localises to the nucleus. Its function is as follows. Transcription factor which may be involved in developmental processes. This is WUSCHEL-related homeobox 6 (WOX6) from Oryza sativa subsp. japonica (Rice).